The following is a 150-amino-acid chain: Large ribosomal subunit protein bL9 (150 aa).

This sequence belongs to the bacterial ribosomal protein bL9 family.

Functionally, binds to the 23S rRNA. The polypeptide is Large ribosomal subunit protein bL9 (Polaromonas naphthalenivorans (strain CJ2)).